We begin with the raw amino-acid sequence, 4644 residues long: Cytoplasmic dynein 1 heavy chain 1 (4644 aa).

Position 2 is an N-acetylserine (S2). Positions 2-1865 (SETGGGEDGS…SIQMANAKFN (1864 aa)) are stem. Coiled-coil stretches lie at residues 48–69 (AALE…FLSD), 179–200 (SVEK…NIEI), 453–476 (AHRK…QLRA), and 541–564 (TEAW…RITA). A Phosphoserine modification is found at S68. An interaction with DYNC1I2 region spans residues 446 to 701 (MVWRINPAHR…NTQEIFDDWA (256 aa)). Residues 649-800 (AKQIDRQLTA…EKVEERNTIS (152 aa)) are interaction with DYNC1LI2. K1123 is subject to N6-acetyllysine. The stretch at 1169-1201 (TYVQSLKRKIKQFEKQVELYRNGQRLLEKQRFQ) forms a coiled coil. S1228 carries the post-translational modification Phosphoserine. Coiled-coil stretches lie at residues 1229–1250 (AIQQ…AVES) and 1355–1371 (RKLR…LKNF). AAA stretches follow at residues 1866 to 2097 (YGFE…VLVS), 2178 to 2450 (EELK…LTRL), 2554 to 2803 (EVET…WVRG), and 2897 to 3166 (VFYE…GGRT). Residues 1904-1911 (GPAGTGKT) and 2222-2229 (GPSGSGKS) contribute to the ATP site. The disordered stretch occupies residues 2389-2409 (EDEAQRRRKGKEDEGEEAASP). ATP contacts are provided by residues 2593 to 2600 (GPPGSGKT) and 2935 to 2942 (GVSGAGKT). 3 coiled-coil regions span residues 3187–3273 (EKRS…ADKQ), 3394–3498 (AIAQ…KNQM), and 3735–3798 (EFQL…VSQQ). Residues 3187–3498 (EKRSELEEQQ…KTSETFKNQM (312 aa)) are stalk. K3478 carries the N6-acetyllysine modification. AAA stretches follow at residues 3551 to 3780 (LSNA…EVTR) and 4003 to 4219 (AHMF…TVDT). S4160 bears the Phosphoserine mark. An N6-acetyllysine modification is found at K4281. Residue T4364 is modified to Phosphothreonine.

This sequence belongs to the dynein heavy chain family. As to quaternary structure, homodimer. The cytoplasmic dynein 1 complex consists of two catalytic heavy chains (HCs) and a number of non-catalytic subunits presented by intermediate chains (ICs), light intermediate chains (LICs) and light chains (LCs); the composition seems to vary in respect to the IC, LIC and LC composition. The heavy chain homodimer serves as a scaffold for the probable homodimeric assembly of the respective non-catalytic subunits. The ICs and LICs bind directly to the HC dimer and dynein LCs assemble on the IC dimer. Interacts with DYNC1LI1; DYNC1LI1 and DYNC1LI2 bind mutually exclusive to DYNC1H1. Interacts with DYNC1LI2; DYNC1LI1 and DYNC1LI2 bind mutually exclusive to DYNC1H1. Interacts with DYNC1I2. Interacts with BICD2. Interacts with DNALI1.

Its subcellular location is the cytoplasm. The protein resides in the cytoskeleton. In terms of biological role, cytoplasmic dynein 1 acts as a motor for the intracellular retrograde motility of vesicles and organelles along microtubules. Dynein has ATPase activity; the force-producing power stroke is thought to occur on release of ADP. Plays a role in mitotic spindle assembly and metaphase plate congression. The protein is Cytoplasmic dynein 1 heavy chain 1 (Dync1h1) of Rattus norvegicus (Rat).